The chain runs to 509 residues: ATP synthase subunit alpha (509 aa).

Residue 169–176 (GDRQTGKT) participates in ATP binding.

It belongs to the ATPase alpha/beta chains family. In terms of assembly, F-type ATPases have 2 components, CF(1) - the catalytic core - and CF(0) - the membrane proton channel. CF(1) has five subunits: alpha(3), beta(3), gamma(1), delta(1), epsilon(1). CF(0) has three main subunits: a(1), b(2) and c(9-12). The alpha and beta chains form an alternating ring which encloses part of the gamma chain. CF(1) is attached to CF(0) by a central stalk formed by the gamma and epsilon chains, while a peripheral stalk is formed by the delta and b chains.

It is found in the cell inner membrane. The catalysed reaction is ATP + H2O + 4 H(+)(in) = ADP + phosphate + 5 H(+)(out). Its function is as follows. Produces ATP from ADP in the presence of a proton gradient across the membrane. The alpha chain is a regulatory subunit. The chain is ATP synthase subunit alpha from Methylorubrum extorquens (strain CM4 / NCIMB 13688) (Methylobacterium extorquens).